The sequence spans 548 residues: MPGDMGPPKQGGTRYGSISSPPSPGPQQAPPGGTYLSEKIPIPDTESGAFSLRKLWAFTGPGFLMSIAFLDPGNIESDLQAGAVAGFKLLWVLLWATVLGLLCQRLAARLGVVTGKDLGEVCHLYYPKVPRILLWLTIELAIVGSDMQEVIGTAIAFSLLSAGRIPLWGGVLITIVDTFFFLFLDNYGLRKLEAFFGFLITIMALTFGYEYVVARPAQGALLQGLFLPSCAGCGQPELLQAVGIVGAIIMPHNIYLHSSLVKSREVDRSRRADIREANMYFLIEATIALSVSFLINLFVMAVFGQAFYKQTNQAAFNICANSSLHDYATIFPRNNLTVAVDIYQGGVILGCLFGPAALYIWAVGLLAAGQSSTMTGTYAGQFVMEGFLKLRWSRFARVLLTRSCAILPTVLVAVFRDLRDLSGLNDLLNVLQSLLLPFAVLPILTFTSMPAVMQEFANGLVSKVISSSIMVLVCAVNLYFVISYVPSLPHPDYFSLVALLAAAYLGLTTYLVWTCLITQGATLLAHSSHQRFLYGLPEEDQENGRTSG.

Residues 1–38 are disordered; the sequence is MPGDMGPPKQGGTRYGSISSPPSPGPQQAPPGGTYLSE. Residues 1 to 55 are Cytoplasmic-facing; it reads MPGDMGPPKQGGTRYGSISSPPSPGPQQAPPGGTYLSEKIPIPDTESGAFSLRKL. A helical transmembrane segment spans residues 56–73; it reads WAFTGPGFLMSIAFLDPG. The Extracellular segment spans residues 74–82; the sequence is NIESDLQAG. A helical membrane pass occupies residues 83 to 102; sequence AVAGFKLLWVLLWATVLGLL. Over 103–139 the chain is Cytoplasmic; the sequence is CQRLAARLGVVTGKDLGEVCHLYYPKVPRILLWLTIE. A helical transmembrane segment spans residues 140–160; it reads LAIVGSDMQEVIGTAIAFSLL. Over 161–164 the chain is Extracellular; that stretch reads SAGR. The chain crosses the membrane as a helical span at residues 165–184; that stretch reads IPLWGGVLITIVDTFFFLFL. Residues 185–193 are Cytoplasmic-facing; that stretch reads DNYGLRKLE. A helical membrane pass occupies residues 194–214; that stretch reads AFFGFLITIMALTFGYEYVVA. Residues 215–237 are Extracellular-facing; that stretch reads RPAQGALLQGLFLPSCAGCGQPE. Residues 238–256 form a helical membrane-spanning segment; it reads LLQAVGIVGAIIMPHNIYL. Over 257 to 284 the chain is Cytoplasmic; sequence HSSLVKSREVDRSRRADIREANMYFLIE. The chain crosses the membrane as a helical span at residues 285 to 304; it reads ATIALSVSFLINLFVMAVFG. Residues 305-346 are Extracellular-facing; it reads QAFYKQTNQAAFNICANSSLHDYATIFPRNNLTVAVDIYQGG. N-linked (GlcNAc...) asparagine glycans are attached at residues N321 and N335. A helical membrane pass occupies residues 347–366; it reads VILGCLFGPAALYIWAVGLL. Residues 367–397 lie on the Cytoplasmic side of the membrane; it reads AAGQSSTMTGTYAGQFVMEGFLKLRWSRFAR. Residues 398 to 415 form a helical membrane-spanning segment; it reads VLLTRSCAILPTVLVAVF. Over 416–426 the chain is Extracellular; it reads RDLRDLSGLND. The chain crosses the membrane as a helical span at residues 427-447; the sequence is LLNVLQSLLLPFAVLPILTFT. Over 448–463 the chain is Cytoplasmic; the sequence is SMPAVMQEFANGLVSK. A helical transmembrane segment spans residues 464 to 485; the sequence is VISSSIMVLVCAVNLYFVISYV. Residues 486-493 are Extracellular-facing; the sequence is PSLPHPDY. Residues 494–513 form a helical membrane-spanning segment; it reads FSLVALLAAAYLGLTTYLVW. Topologically, residues 514-548 are cytoplasmic; it reads TCLITQGATLLAHSSHQRFLYGLPEEDQENGRTSG.

It belongs to the NRAMP family.

Its subcellular location is the late endosome membrane. The protein localises to the lysosome membrane. It carries out the reaction Zn(2+)(in) + H(+)(out) = Zn(2+)(out) + H(+)(in). The catalysed reaction is Fe(2+)(in) + H(+)(out) = Fe(2+)(out) + H(+)(in). The enzyme catalyses Mn(2+)(in) + H(+)(out) = Mn(2+)(out) + H(+)(in). Its function is as follows. Macrophage-specific antiporter that fluxes metal ions in either direction against a proton gradient. Localized to late endosomal lysosomal membranes, delivers bivalent cations from the cytosol into these acidic compartments where they may directly affect antimicrobial activity. Involved in iron metabolism and host natural resistance to infection with intracellular parasites. Pathogen resistance involves sequestration of Fe(2+) and Mn(2+), cofactors of both prokaryotic and eukaryotic catalases and superoxide dismutases, not only to protect the macrophage against its own generation of reactive oxygen species, but to deny the cations to the pathogen for synthesis of its protective enzymes. The sequence is that of Natural resistance-associated macrophage protein 1 (SLC11A1) from Cervus elaphus (Red deer).